A 301-amino-acid polypeptide reads, in one-letter code: UBX domain-containing protein 2 (301 aa).

The segment at 1–61 (MSRNIRTFRD…AARGPDSEAH (61 aa)) is disordered. The SEP domain occupies 89–153 (TISLTLHLWS…KVNRHHEEYV (65 aa)). Residues 176-200 (GQSSSSATTAGTSSATTDHNPDHTA) are disordered. The span at 178–192 (SSSSATTAGTSSATT) shows a compositional bias: low complexity. In terms of domain architecture, UBX spans 218 to 295 (MNEPTTNIQI…NVLNSVVAVK (78 aa)).

Belongs to the NSFL1C family. In terms of assembly, interacts with cdc-48.1 (via N-terminus) and cdc-48.2 (via N-terminus). Interacts with kinase air-1. In terms of tissue distribution, expressed in the germline (at protein level). Expressed in spermatocytes but not in mature sperm (at protein level). Ubiquitously expressed. Predominantly expressed in the spermatheca.

It is found in the cytoplasm. The protein localises to the perinuclear region. The protein resides in the nucleus. It localises to the cytoskeleton. Its subcellular location is the microtubule organizing center. It is found in the centrosome. Functionally, ubiquitin-binding protein which acts as an adapter for ATPase cdc-48.1 and/or cdc-48.2, conferring substrate specificity. Together with ubxn-2 and ubxn-3, plays a role in hermaphrodite spermatogenesis probably by promoting the degradation of sex determination terminal factor tra-1. Probably in association with ATPase cdc-48.1 or/and cdc-48.2, regulates the centrosomal levels of kinase air-1 levels during mitotic progression by promoting air-1 removal from centrosomes in prophase. Also, regulates spindle orientation in the one-cell embryo by controlling centration and rotation of the pronuclei-centrosome complex in prophase. The protein is UBX domain-containing protein 2 of Caenorhabditis elegans.